The following is a 362-amino-acid chain: tRNA-specific 2-thiouridylase MnmA (362 aa).

ATP-binding positions include 6–13 (AMSGGVDS) and Leu-32. Catalysis depends on Cys-101, which acts as the Nucleophile. A disulfide bridge links Cys-101 with Cys-197. Gly-125 is an ATP binding site. The tract at residues 147–149 (KDQ) is interaction with tRNA. Cys-197 acts as the Cysteine persulfide intermediate in catalysis.

It belongs to the MnmA/TRMU family.

It localises to the cytoplasm. It catalyses the reaction S-sulfanyl-L-cysteinyl-[protein] + uridine(34) in tRNA + AH2 + ATP = 2-thiouridine(34) in tRNA + L-cysteinyl-[protein] + A + AMP + diphosphate + H(+). Its function is as follows. Catalyzes the 2-thiolation of uridine at the wobble position (U34) of tRNA, leading to the formation of s(2)U34. This Saccharopolyspora erythraea (strain ATCC 11635 / DSM 40517 / JCM 4748 / NBRC 13426 / NCIMB 8594 / NRRL 2338) protein is tRNA-specific 2-thiouridylase MnmA.